The sequence spans 394 residues: Phosphatidylinositol 4-phosphate 5-kinase-like protein 1 (394 aa).

The PIPK domain maps to 36–393 (DKQSRLGLFE…RLCQWVEAHT (358 aa)).

In terms of assembly, heterodimerizes with other type I phosphatidylinositol 4-phosphate 5-kinase.

It is found in the cytoplasm. Its subcellular location is the membrane. It carries out the reaction a 1,2-diacyl-sn-glycero-3-phospho-(1D-myo-inositol 4-phosphate) + ATP = a 1,2-diacyl-sn-glycero-3-phospho-(1D-myo-inositol-4,5-bisphosphate) + ADP + H(+). Its function is as follows. May act as a scaffold to localize and regulate type I PI(4)P 5-kinases to specific compartments within the cell, where they generate PI(4,5)P2 for actin nucleation, signaling and scaffold protein recruitment and conversion to PI(3,4,5)P3. The polypeptide is Phosphatidylinositol 4-phosphate 5-kinase-like protein 1 (PIP5KL1) (Homo sapiens (Human)).